We begin with the raw amino-acid sequence, 194 residues long: RNA polymerase II subunit A C-terminal domain phosphatase SSU72 like protein 6 (194 aa).

The protein belongs to the SSU72 phosphatase family.

The protein resides in the nucleus. It carries out the reaction O-phospho-L-seryl-[protein] + H2O = L-seryl-[protein] + phosphate. The catalysed reaction is O-phospho-L-threonyl-[protein] + H2O = L-threonyl-[protein] + phosphate. In terms of biological role, protein phosphatase that catalyzes the dephosphorylation of the C-terminal domain of RNA polymerase II. Plays a role in RNA processing and termination. This is RNA polymerase II subunit A C-terminal domain phosphatase SSU72 like protein 6 from Homo sapiens (Human).